The chain runs to 322 residues: Nuclease 1, mitochondrial (322 aa).

Catalysis depends on His-142, which acts as the Proton acceptor. Asn-174 contributes to the Mg(2+) binding site.

Belongs to the DNA/RNA non-specific endonuclease family. In terms of assembly, homodimer. Mn(2+) serves as cofactor. Mg(2+) is required as a cofactor.

It is found in the mitochondrion inner membrane. In terms of biological role, this enzyme has both RNase and DNase activity. It degrades single-stranded DNA and RNA. The polypeptide is Nuclease 1, mitochondrial (pnu1) (Schizosaccharomyces pombe (strain 972 / ATCC 24843) (Fission yeast)).